The following is a 961-amino-acid chain: Glycine dehydrogenase (decarboxylating) (961 aa).

Lysine 702 carries the post-translational modification N6-(pyridoxal phosphate)lysine.

Belongs to the GcvP family. As to quaternary structure, the glycine cleavage system is composed of four proteins: P, T, L and H. Requires pyridoxal 5'-phosphate as cofactor.

It carries out the reaction N(6)-[(R)-lipoyl]-L-lysyl-[glycine-cleavage complex H protein] + glycine + H(+) = N(6)-[(R)-S(8)-aminomethyldihydrolipoyl]-L-lysyl-[glycine-cleavage complex H protein] + CO2. Functionally, the glycine cleavage system catalyzes the degradation of glycine. The P protein binds the alpha-amino group of glycine through its pyridoxal phosphate cofactor; CO(2) is released and the remaining methylamine moiety is then transferred to the lipoamide cofactor of the H protein. The protein is Glycine dehydrogenase (decarboxylating) of Rhodopseudomonas palustris (strain BisA53).